The sequence spans 576 residues: Sulfite reductase [NADPH] hemoprotein beta-component (576 aa).

[4Fe-4S] cluster is bound by residues Cys435, Cys441, Cys480, and Cys484. Cys484 contacts siroheme.

Belongs to the nitrite and sulfite reductase 4Fe-4S domain family. Alpha(8)-beta(8). The alpha component is a flavoprotein, the beta component is a hemoprotein. Requires siroheme as cofactor. [4Fe-4S] cluster is required as a cofactor.

The catalysed reaction is hydrogen sulfide + 3 NADP(+) + 3 H2O = sulfite + 3 NADPH + 4 H(+). The protein operates within sulfur metabolism; hydrogen sulfide biosynthesis; hydrogen sulfide from sulfite (NADPH route): step 1/1. Its function is as follows. Component of the sulfite reductase complex that catalyzes the 6-electron reduction of sulfite to sulfide. This is one of several activities required for the biosynthesis of L-cysteine from sulfate. This Photorhabdus laumondii subsp. laumondii (strain DSM 15139 / CIP 105565 / TT01) (Photorhabdus luminescens subsp. laumondii) protein is Sulfite reductase [NADPH] hemoprotein beta-component.